Here is a 376-residue protein sequence, read N- to C-terminus: Phosphate-binding protein (376 aa).

Intrachain disulfides connect cysteine 113–cysteine 158 and cysteine 306–cysteine 369.

Heterooligomer with human PON1. As to expression, found in human plasma.

Its subcellular location is the secreted. Functionally, phosphate-binding protein. The protein is Phosphate-binding protein of Unknown prokaryotic organism.